We begin with the raw amino-acid sequence, 658 residues long: MTQLAIGEATPHGATYDGHGVNFTLFSAHAERVELCVFDSRGNERRYDLPGRRGDVWHGYLAGARPGLRYGYRVHGPWQPAQGHRFNPVKLLLDPYARRVEGELKDHPLLHGGHDEPDYRDNAAVAPKSVVISDHYDWEDDAAPRTPWGKTVIYEAHVKGLTYLHPELPQEIRGTYKALGHPVMVAYFKQLGITALELLPVAQFASEPRLQRMGLTNYWGYNPMAMFALHPAWASSPEMALDEFRDAVKALHRAGIEVILDIVLNHSAELDLDGPTFSLRGIDNRSYYWIRDDGDYHNWTGCGNTLNLSHPGVVEYACECLRYWVETCHVDGFRFDLASVMGRTPTFRQDAPLFAAIKACPVLSTVKLIAEPWDIGEGGYQVGNFPPPFAEWNDHFRDAARRFWLPRNLTTGEFACRFAASSDVFKRNGRAPGASVNLLTAHDGFTLRDCVCFNQKHNEANGEENRDGTNSNYSDNHGKEGLGGPLDLMERRRDSIHALLATLLLSQGTPMLLAGDEHGHSQHGNNNAYCQDNALTWLDWQQANRGLTTFTAALIRLRQQIPALTGNSWWEEGDGNVRWLNKNAQPLSADEWQNGPKLMQILLSDRFLIAINATLEVTDIVLPEGEWRAVPPFAGEDNPVITAVWQGPAHGLCVFQRG.

D336 acts as the Nucleophile in catalysis. Catalysis depends on E371, which acts as the Proton donor. Positions 459–484 are disordered; that stretch reads EANGEENRDGTNSNYSDNHGKEGLGG.

The protein belongs to the glycosyl hydrolase 13 family.

It carries out the reaction Hydrolysis of (1-&gt;6)-alpha-D-glucosidic linkages to branches with degrees of polymerization of three or four glucose residues in limit dextrin.. Its pathway is glycan degradation; glycogen degradation. Removes maltotriose and maltotetraose chains that are attached by 1,6-alpha-linkage to the limit dextrin main chain, generating a debranched limit dextrin. In Salmonella enteritidis PT4 (strain P125109), this protein is Glycogen debranching enzyme.